We begin with the raw amino-acid sequence, 198 residues long: Recombination protein RecR (198 aa).

The C4-type zinc-finger motif lies at 57-72 (CSVCGHITENDPCYIC). The Toprim domain maps to 80 to 175 (SVICVVEDDK…KVTRLAQGLS (96 aa)).

It belongs to the RecR family.

In terms of biological role, may play a role in DNA repair. It seems to be involved in an RecBC-independent recombinational process of DNA repair. It may act with RecF and RecO. The chain is Recombination protein RecR from Staphylococcus epidermidis (strain ATCC 35984 / DSM 28319 / BCRC 17069 / CCUG 31568 / BM 3577 / RP62A).